A 435-amino-acid chain; its full sequence is Methylenetetrahydrofolate--tRNA-(uracil-5-)-methyltransferase TrmFO (435 aa).

Residue 10-15 (GAGLAG) coordinates FAD.

It belongs to the MnmG family. TrmFO subfamily. Requires FAD as cofactor.

The protein resides in the cytoplasm. The enzyme catalyses uridine(54) in tRNA + (6R)-5,10-methylene-5,6,7,8-tetrahydrofolate + NADH + H(+) = 5-methyluridine(54) in tRNA + (6S)-5,6,7,8-tetrahydrofolate + NAD(+). It catalyses the reaction uridine(54) in tRNA + (6R)-5,10-methylene-5,6,7,8-tetrahydrofolate + NADPH + H(+) = 5-methyluridine(54) in tRNA + (6S)-5,6,7,8-tetrahydrofolate + NADP(+). Functionally, catalyzes the folate-dependent formation of 5-methyl-uridine at position 54 (M-5-U54) in all tRNAs. The protein is Methylenetetrahydrofolate--tRNA-(uracil-5-)-methyltransferase TrmFO of Halalkalibacterium halodurans (strain ATCC BAA-125 / DSM 18197 / FERM 7344 / JCM 9153 / C-125) (Bacillus halodurans).